A 216-amino-acid chain; its full sequence is MSSDQVLERFMKNGLMNAELKEFFEKALVNEGFSTMELRMQETPIKIILKVAKPHEAIGEKKFRLRQFQHLAAQRLEVPDESVEIVVEKVHEKGLCALIQANFIREKILGGVQYRRAVNMALKTARHAKAQGCQIIVSGKLKGQRAKSVKFQDGVLIHSGDAVKDYINTGYATVETKQGVIGIQVRIMLPYDPEGVLGPNYPLPDRITILEPSEIQ.

The region spanning 20–91 is the KH type-2 domain; that stretch reads LKEFFEKALV…SVEIVVEKVH (72 aa).

The protein belongs to the universal ribosomal protein uS3 family.

This is Small ribosomal subunit protein uS3 (RPS3) from Encephalitozoon cuniculi (strain GB-M1) (Microsporidian parasite).